A 402-amino-acid chain; its full sequence is UDP-N-acetylmuramoylalanine--D-glutamate ligase (402 aa).

97–103 lines the ATP pocket; the sequence is GTNGKTT.

The protein belongs to the MurCDEF family.

It is found in the cytoplasm. The catalysed reaction is UDP-N-acetyl-alpha-D-muramoyl-L-alanine + D-glutamate + ATP = UDP-N-acetyl-alpha-D-muramoyl-L-alanyl-D-glutamate + ADP + phosphate + H(+). The protein operates within cell wall biogenesis; peptidoglycan biosynthesis. In terms of biological role, cell wall formation. Catalyzes the addition of glutamate to the nucleotide precursor UDP-N-acetylmuramoyl-L-alanine (UMA). The chain is UDP-N-acetylmuramoylalanine--D-glutamate ligase from Campylobacter jejuni subsp. jejuni serotype O:6 (strain 81116 / NCTC 11828).